The following is an 820-amino-acid chain: MRYDPSLIEKKWQEFWKEHKSFKANEADDKPKYYVLDMFPYPSGAGLHVGHLIGYTATDIVARYKRAKGFSVLHPMGWDSFGLPAEQYAVRTGTHPRETTQKNIENFRKQLSAMGFSYDEGREFATSDPEYYRWTQKLFLLLYEKGLAYMADMAVNYCPELGTVLSNEEVENGLSIEGGYPVERRMLRQWILRITAYSDQLLEGLEGLDWPENVKQLQRNWIGKSEGALVRFKVNNQNFLEVFTTRPDTLCGVSFLVIAPEHPEVGQLIAEDRREEVEAYICRAQSKSERDRISESKIKSGVFTGTYAKHPITGADIPIWVSDYVILGYGSGVVMGVPAHDERDREFAETFSLPIYEVLDTDGYCIHSNHGDFLLDGLWGREAQDYVIAYLQKKNLGESKVAYKLRDWLFSRQRYWGEPIPIIHFEDGTCRPLEDDELPLLPPEIQDYRPEGFGQGPLAKVKEWVDIHDKKTNRQGRRETHTMPQWAGSCWYYLRFCDALNSQAPWSNEKEKYWMPVDLYIGGAEHAVLHLLYSRFWHRVFYDAGMVSTPEPFKKLINQGLVLATSYRIPGKGYVYPEDAHEDNGVWMSTSGEELEVRQEKMSKSKLNGVDPQILIEEFGADALRMYAMFSGPLDKNKLWCNQGVSGCRRFLNRFYELVTSSLVQDIDDPKGMYLAHRLVHRVGEDIEKMSLNTIPSSFMEFINEFVKLDIYPKSALAMVVRALAPIAPHISEELWTILGNAPGIDQAGWPEVDPKYLEDTSVTFVIQVNGKLRARLDISKNAAREEVLSLAREAVSRYLEDKEVKKEIFVPNRLVNFVL.

The short motif at 40-51 (PYPSGAGLHVGH) is the 'HIGH' region element. The 'KMSKS' region signature appears at 601 to 605 (KMSKS). Position 604 (Lys604) interacts with ATP.

It belongs to the class-I aminoacyl-tRNA synthetase family.

The protein localises to the cytoplasm. The enzyme catalyses tRNA(Leu) + L-leucine + ATP = L-leucyl-tRNA(Leu) + AMP + diphosphate. This chain is Leucine--tRNA ligase, found in Chlamydia felis (strain Fe/C-56) (Chlamydophila felis).